Reading from the N-terminus, the 247-residue chain is MTHSTLPPQPFAILAMPRTGTHYLEELVNEHPNVLSNGELLNTYDTNWPDKERLLLSDRELLERAFLRYPPHSDKKVTHVGCKINEPQFQERPSFFAELTAWPGLKVILVIRRNTLESLRSFVQARQTRQWLKFKSDSSAPPPPVMLPFATCEAYFKAADDFHARVVYAFDSSRIRLIEYERLLRDPVPCVATVLDFLGAPALQLADRGILRRQETRPLDQTVRNFHELRVHFANGPYARFFELAND.

A hydrophobic region spans residues 1–17; it reads MTHSTLPPQPFAILAMP.

In terms of biological role, required for the formation of sulfated nod factor. Proposed to transfer activated sulfate (PAPS) to a N-acetylglucosamine of the nod factor. This is Nodulation protein H (nodH) from Rhizobium meliloti (strain 1021) (Ensifer meliloti).